Here is a 316-residue protein sequence, read N- to C-terminus: Remorin 4.1 (316 aa).

Disordered stretches follow at residues 1–108 (MLSE…PSEL), 125–202 (NANA…SVGQ), and 267–287 (AQNE…SAEA). Residues 40-53 (EREEEVVVEEELEE) show a composition bias toward acidic residues. Residues 92–104 (RHTSIRSVGSDTA) are compositionally biased toward polar residues. Low complexity predominate over residues 125-135 (NANAAAAAAAN). Composition is skewed to basic and acidic residues over residues 143 to 153 (GVDDALGRIGE) and 277 to 287 (KAEEKRASAEA). Residues 242-288 (VEKANAWLKKYERKLEEKRAKAMEKAQNEVAKARRKAEEKRASAEAK) adopt a coiled-coil conformation.

This sequence belongs to the remorin family. As to quaternary structure, interacts with BAK1. Phosphorylated by BRI1. Phosphorylation reduces the binding affinity to BAK1. In terms of tissue distribution, expressed in roots, leaf blades and leaf sheaths. Expressed at low levels in stems and spikelets.

The protein resides in the cell membrane. Functionally, functions in abscisic acid (ABA) signaling downstream of BZIP23. Acts as antagonistic and negative regulator of brassinosteroid (BR) signaling. Binds to BAK1 and inhibits its interaction with the BR receptor BRI1. Inhibits the formation and subsequent activation of the BRI1-BAK1 receptor complex. In Oryza sativa subsp. japonica (Rice), this protein is Remorin 4.1.